Reading from the N-terminus, the 156-residue chain is Small ribosomal subunit protein uS7 (156 aa).

The protein belongs to the universal ribosomal protein uS7 family. In terms of assembly, part of the 30S ribosomal subunit. Contacts proteins S9 and S11.

One of the primary rRNA binding proteins, it binds directly to 16S rRNA where it nucleates assembly of the head domain of the 30S subunit. Is located at the subunit interface close to the decoding center, probably blocks exit of the E-site tRNA. The chain is Small ribosomal subunit protein uS7 from Caldanaerobacter subterraneus subsp. tengcongensis (strain DSM 15242 / JCM 11007 / NBRC 100824 / MB4) (Thermoanaerobacter tengcongensis).